Here is a 104-residue protein sequence, read N- to C-terminus: Large ribosomal subunit protein uL24 (104 aa).

The protein belongs to the universal ribosomal protein uL24 family. As to quaternary structure, part of the 50S ribosomal subunit.

In terms of biological role, one of two assembly initiator proteins, it binds directly to the 5'-end of the 23S rRNA, where it nucleates assembly of the 50S subunit. One of the proteins that surrounds the polypeptide exit tunnel on the outside of the subunit. This is Large ribosomal subunit protein uL24 from Clostridium perfringens (strain ATCC 13124 / DSM 756 / JCM 1290 / NCIMB 6125 / NCTC 8237 / Type A).